Here is a 211-residue protein sequence, read N- to C-terminus: Large ribosomal subunit protein bL25 (211 aa).

Disordered stretches follow at residues 1–23 (MAGE…AARQ) and 191–211 (LRSA…AEEV). Over residues 196 to 211 (NEADEEETEEATAEEV) the composition is skewed to acidic residues.

This sequence belongs to the bacterial ribosomal protein bL25 family. CTC subfamily. Part of the 50S ribosomal subunit; part of the 5S rRNA/L5/L18/L25 subcomplex. Contacts the 5S rRNA. Binds to the 5S rRNA independently of L5 and L18.

This is one of the proteins that binds to the 5S RNA in the ribosome where it forms part of the central protuberance. In Dinoroseobacter shibae (strain DSM 16493 / NCIMB 14021 / DFL 12), this protein is Large ribosomal subunit protein bL25.